The chain runs to 168 residues: Photosystem I assembly protein Ycf3 (168 aa).

3 TPR repeats span residues 35–68 (AFAY…EMDP), 72–105 (SYIL…NPFL), and 120–153 (GEQA…TPGN).

This sequence belongs to the Ycf3 family.

It is found in the plastid membrane. In terms of biological role, essential for the assembly of the photosystem I (PSI) complex. May act as a chaperone-like factor to guide the assembly of the PSI subunits. The sequence is that of Photosystem I assembly protein Ycf3 from Cuscuta gronovii (Common dodder).